We begin with the raw amino-acid sequence, 483 residues long: MTPILTVLICLGLSLGPRTHVQAGHLPKPTLWAEPGSVIIQGSPVTLRCQGSLQAEEYHLYRENKSASWVRRIQEPGKNGQFPIPSITWEHAGRYHCQYYSHNHSSEYSDPLELVVTGAYSKPTLSALPSPVVTSGGNVTLQCVSQVAFDGFILCKEGEDEHPQRLNSHSHARGWSWAIFSVGPVSPSRRWSYRCYAYDSNSPYVWSLPSDLLELLVPGVSKKPSLSVQPGPMVAPGESLTLQCVSDVGYDRFVLYKEGERDFLQRPGWQPQAGLSQANFTLGPVSPSHGGQYRCYSAHNLSSEWSAPSDPLDILITGQFYDRPSLSVQPVPTVAPGKNVTLLCQSRGQFHTFLLTKEGAGHPPLHLRSEHQAQQNQAEFRMGPVTSAHVGTYRCYSSLSSNPYLLSLPSDPLELVVSEAAETLSPSQNKTDSTTTSLGQHPQDYTVENLIRMGVAGLVLVVLGILLFEAQHSQRSLQDAAGR.

The N-terminal stretch at 1–23 is a signal peptide; the sequence is MTPILTVLICLGLSLGPRTHVQA. The Extracellular segment spans residues 24–449; it reads GHLPKPTLWA…QHPQDYTVEN (426 aa). Ig-like C2-type domains lie at 27–113, 117–222, 224–313, and 324–413; these read PKPT…DPLE, TGAY…GVSK, PSLS…DPLD, and PSLS…SDPL. C49 and C97 form a disulfide bridge. 3 N-linked (GlcNAc...) asparagine glycosylation sites follow: N64, N103, and N138. 2 cysteine pairs are disulfide-bonded: C143–C195 and C244–C295. N-linked (GlcNAc...) asparagine glycosylation is found at N279, N300, and N339. C344 and C395 are oxidised to a cystine. Y404 is modified (3'-nitrotyrosine). Residue N429 is glycosylated (N-linked (GlcNAc...) asparagine). A helical membrane pass occupies residues 450-470; it reads LIRMGVAGLVLVVLGILLFEA. Residues 471-483 lie on the Cytoplasmic side of the membrane; the sequence is QHSQRSLQDAAGR.

Homodimer. Detected on the surface of all peripheral blood monocytes, neutrophils, basophils and eosinophils (at protein level). Expression levels are very low or not detectable on monocytes, T-cells, B-cells, dendritic cells and natural killer (NK) cells.

It localises to the cell membrane. The protein resides in the secreted. Part of the innate immune responses against microbial infection. Specifically recognizes a set of N-terminally truncated immunoglobulins that are produced via cleavage by proteases from a range of pathogenic bacteria and fungi, including L.pneumophila, M.hyorhinis, S.pneumoniae, S.aureus and C.albicans. Recognizes epitopes that are in part in the variable region of the immunoglobulin light chains, but requires also the constant region for signaling. Binds to a subset of cleaved IgM, IgG3 and IgG4 molecules, but does not bind cleaved IgA1. Binding of N-terminally truncated immunoglobulins mediates activation of neutrophils. In monocytes, activation leads to the release of CSF2, CF3, IL6, CXCL8 and CCL3 and down-regulates responses to bacterial lipopolysaccharide (LPS), possibly via down-regulation of TLR4 expression and reduced signaling via TLR4. In eosinophils, activation by ligand binding leads to the release of RNASE2, IL4 and leukotriene C4. Does not bind class I MHC antigens. The polypeptide is Leukocyte immunoglobulin-like receptor subfamily A member 2 (LILRA2) (Homo sapiens (Human)).